Consider the following 864-residue polypeptide: Structure-specific endonuclease subunit SLX4 (864 aa).

A compositionally biased stretch (low complexity) spans 35–54 (SPLSLPSPTSLLDFLSTSTS). Disordered stretches follow at residues 35–72 (SPLS…GKEV), 89–113 (VVSG…PGNA), 160–193 (KANQ…HIND), 288–318 (GLSD…NPPK), 348–382 (LSDE…EKKN), 413–432 (ANGH…HISN), and 625–771 (KTSN…ETLP). The segment covering 58–72 (ARSDTDGDKTQGKEV) has biased composition (basic and acidic residues). Polar residues-rich tracts occupy residues 160–169 (KANQTVSLQP) and 289–306 (LSDS…SATS). Residues 307-317 (KPRRVKAKNPP) are compositionally biased toward basic residues. A compositionally biased stretch (polar residues) spans 659–668 (SIPQTATTQV). Residues 683-695 (VPVPSRRSTSTSK) show a composition bias toward low complexity. Polar residues predominate over residues 743–771 (PESFNLPTTPLTIRSGKIPSTGTASETLP).

This sequence belongs to the SLX4 family. As to quaternary structure, forms a heterodimer with SLX1. Phosphorylated in response to DNA damage.

The protein localises to the nucleus. Its function is as follows. Regulatory subunit of the SLX1-SLX4 structure-specific endonuclease that resolves DNA secondary structures generated during DNA repair and recombination. Has endonuclease activity towards branched DNA substrates, introducing single-strand cuts in duplex DNA close to junctions with ss-DNA. The chain is Structure-specific endonuclease subunit SLX4 from Paracoccidioides brasiliensis (strain Pb03).